Here is a 40-residue protein sequence, read N- to C-terminus: Large ribosomal subunit protein bL36A (40 aa).

Belongs to the bacterial ribosomal protein bL36 family.

The sequence is that of Large ribosomal subunit protein bL36A from Renibacterium salmoninarum (strain ATCC 33209 / DSM 20767 / JCM 11484 / NBRC 15589 / NCIMB 2235).